We begin with the raw amino-acid sequence, 444 residues long: Aflatoxin biosynthesis regulatory protein (444 aa).

The disordered stretch occupies residues methionine 1–arginine 26. Positions cysteine 29–cysteine 56 form a DNA-binding region, zn(2)-C6 fungal-type. The segment at methionine 64 to glutamine 167 is disordered. The span at threonine 106–proline 116 shows a compositional bias: basic residues. A compositionally biased stretch (low complexity) spans proline 120 to proline 130. A compositionally biased stretch (polar residues) spans proline 136 to glutamine 149.

In terms of assembly, interacts with its co-regulator aflS.

The protein localises to the nucleus. It is found in the endosome. Transcription factor involved in regulation of the aflatoxin biosynthesis gene cluster. Binds with its co-regulator aflS to AFLR1 elements (5'-TCGSWNNSCGR-3') present in the promoters of the aflatoxin cluster genes. The ratio of the expression data between aflS:aflR plays a crucial role in the regulation of aflatoxins production. A high ratio, produced at a range between 17 and 30 degrees Celsius, corresponds with the production profile of aflatoxin G1 biosynthesis. A low ratio, produced over 30 degrees Celsius, is related to aflatoxin B1 biosynthesis. The polypeptide is Aflatoxin biosynthesis regulatory protein (Aspergillus parasiticus (strain ATCC 56775 / NRRL 5862 / SRRC 143 / SU-1)).